The following is a 547-amino-acid chain: Sodium-coupled neutral amino acid transporter 4 (547 aa).

The disordered stretch occupies residues methionine 1–serine 26. Over methionine 1–glycine 104 the chain is Extracellular. Serine 49 is subject to Phosphoserine. The chain crosses the membrane as a helical span at residues isoleucine 105–leucine 125. Over leucine 126–lysine 151 the chain is Cytoplasmic. A helical transmembrane segment spans residues isoleucine 152–isoleucine 172. Topologically, residues isoleucine 173–tyrosine 195 are extracellular. The chain crosses the membrane as a helical span at residues proline 196 to leucine 216. At lysine 217–glycine 220 the chain is on the cytoplasmic side. Residues tyrosine 221–isoleucine 241 traverse the membrane as a helical segment. The Extracellular segment spans residues tyrosine 242–threonine 332. Cysteine 249 and cysteine 321 are disulfide-bonded. N-linked (GlcNAc...) asparagine glycosylation is found at asparagine 260, asparagine 264, and asparagine 276. A helical transmembrane segment spans residues alanine 333–tyrosine 353. The Cytoplasmic portion of the chain corresponds to serine 354–asparagine 369. The helical transmembrane segment at isoleucine 370–phenylalanine 390 threads the bilayer. The Extracellular segment spans residues tyrosine 391–proline 411. A helical membrane pass occupies residues leucine 412–phenylalanine 432. Residues proline 433–histidine 453 lie on the Cytoplasmic side of the membrane. Residues phenylalanine 454–isoleucine 474 traverse the membrane as a helical segment. Over lysine 475 to tyrosine 476 the chain is Extracellular. The chain crosses the membrane as a helical span at residues isoleucine 477–phenylalanine 497. Topologically, residues tyrosine 498–glycine 514 are cytoplasmic. A helical membrane pass occupies residues alanine 515–isoleucine 535. The Extracellular portion of the chain corresponds to aspartate 536–histidine 547.

This sequence belongs to the amino acid/polyamine transporter 2 family. In terms of processing, the disulfide bond plays an important role in substrate transport, but has no effect on trafficking to the cell surface.

It is found in the cell membrane. The protein localises to the cell projection. The protein resides in the microvillus membrane. It catalyses the reaction L-methionine(in) + Na(+)(in) = L-methionine(out) + Na(+)(out). The catalysed reaction is L-asparagine(in) + Na(+)(in) = L-asparagine(out) + Na(+)(out). The enzyme catalyses L-threonine(in) + Na(+)(in) = L-threonine(out) + Na(+)(out). It carries out the reaction L-serine(in) + Na(+)(in) = L-serine(out) + Na(+)(out). It catalyses the reaction glycine(in) + Na(+)(in) = glycine(out) + Na(+)(out). The catalysed reaction is L-alanine(in) + Na(+)(in) = L-alanine(out) + Na(+)(out). The enzyme catalyses L-glutamine(in) + Na(+)(in) = L-glutamine(out) + Na(+)(out). It carries out the reaction L-histidine(in) + Na(+)(in) = L-histidine(out) + Na(+)(out). It catalyses the reaction L-cysteine(in) + Na(+)(in) = L-cysteine(out) + Na(+)(out). The catalysed reaction is L-proline(in) + Na(+)(in) = L-proline(out) + Na(+)(out). Symporter that cotransports neutral amino acids and sodium ions from the extraccellular to the intracellular side of the cell membrane. The transport is electrogenic, pH dependent and partially tolerates substitution of Na(+) by Li(+). Preferentially transports smaller amino acids, such as glycine, L-alanine, L-serine, L-asparagine and L-threonine, followed by L-cysteine, L-histidine, L-proline and L-glutamine and L-methionine. The polypeptide is Sodium-coupled neutral amino acid transporter 4 (Pongo abelii (Sumatran orangutan)).